The primary structure comprises 612 residues: Coagulation factor XII (612 aa).

An N-terminal signal peptide occupies residues 1-19 (MRALLLLGALLVSLESTVS). The Fibronectin type-II domain occupies 42–90 (VTGEPCHFPFQYHRQLHHKCIHRGRPGPRPWCATTPNFEKDQRWAYCLE). 20 cysteine pairs are disulfide-bonded: C47/C73, C61/C88, C98/C110, C104/C119, C121/C130, C135/C163, C161/C170, C178/C189, C183/C198, C200/C209, C217/C306, C240/C288, C268/C301, C355/C482, C393/C409, C401/C471, C432/C435, C498/C566, C529/C545, and C556/C587. The EGF-like 1 domain maps to 94-131 (VKDHCSKHNPCQKGGTCVNMPDGPRCICADHFTGKHCQ). T109 is a glycosylation site (O-linked (Fuc) threonine). The 41-residue stretch at 133–173 (EKCFEPQFFRFFHENEIWHRLEPAGVVKCQCKGPNAQCKPL) folds into the Fibronectin type-I domain. The EGF-like 2 domain occupies 174–210 (ASQVCRTNPCLNGGSCLQAEGHRLCRCAPSFAGRLCD). Residues 217-306 (CYDDRDRGLS…SWNYCRLAPC (90 aa)) form the Kringle domain. N-linked (GlcNAc...) asparagine glycans are attached at residues N251 and N282. The region spanning 369-611 (VVGGLVALPG…YLAWIREHTA (243 aa)) is the Peptidase S1 domain. H408 serves as the catalytic Charge relay system. N-linked (GlcNAc...) asparagine glycosylation occurs at N429. D457 functions as the Charge relay system in the catalytic mechanism. The Charge relay system role is filled by S560.

The protein belongs to the peptidase S1 family. Interacts with HRG; the interaction, which is enhanced in the presence of zinc ions and inhibited by heparin-binding, inhibits factor XII autoactivation and contact-initiated coagulation. Post-translationally, O- and N-glycosylated.

It is found in the secreted. It catalyses the reaction Selective cleavage of Arg-|-Ile bonds in factor VII to form factor VIIa and factor XI to form factor XIa.. Activity is promoted in the presence of negatively charged surfaces. Functionally, factor XII is a serum glycoprotein that participates in the initiation of blood coagulation, fibrinolysis, and the generation of bradykinin and angiotensin. Prekallikrein is cleaved by factor XII to form kallikrein, which then cleaves factor XII first to alpha-factor XIIa and then to beta-factor XIIa. Alpha-factor XIIa activates factor XI to factor XIa. In Bos taurus (Bovine), this protein is Coagulation factor XII (F12).